A 398-amino-acid polypeptide reads, in one-letter code: Acetate kinase 1 (398 aa).

Asn-9 provides a ligand contact to Mg(2+). Lys-16 is a binding site for ATP. Arg-89 is a binding site for substrate. Asp-146 (proton donor/acceptor) is an active-site residue. ATP contacts are provided by residues 206–210 (HLGNG), 281–283 (DCR), and 329–333 (GIGEN). Glu-384 serves as a coordination point for Mg(2+).

It belongs to the acetokinase family. Homodimer. Mg(2+) is required as a cofactor. The cofactor is Mn(2+).

It is found in the cytoplasm. The enzyme catalyses acetate + ATP = acetyl phosphate + ADP. It functions in the pathway metabolic intermediate biosynthesis; acetyl-CoA biosynthesis; acetyl-CoA from acetate: step 1/2. Catalyzes the formation of acetyl phosphate from acetate and ATP. Can also catalyze the reverse reaction. This chain is Acetate kinase 1, found in Vibrio vulnificus (strain CMCP6).